The chain runs to 362 residues: MGNIFGHLFRITTFGESHGGGVGVVIDGCPPRIEISETEIQLELDRRRPGQSKITTPRQESDTCEIISGVFEGKTLGTSIAILVRNKDARSQDYDEMALKYRPSHADATYDAKYGIRNWKGGGRSSARETIGRVAAGAIAKKILQQVAGVEIVAYVKRIKDLEAIINPETVTLEEVESNIVRCPDQDAAQKMIDLIDQTRREKDSIGGVVECVMRNVPKGLGEPVFDKLEADLAKGMMSLPATKGFEIGSGFAGTLLTGSEHNDEFYTDEAGNIRTVTNLSGGIQGGISNGENIIIRVAFKPTATIGKEQQTVTQTGEETTLAAKGRHDPCVLPRAVPMVEAMAALVLCDHLLRHHGQCKTV.

Arginine 47 contributes to the NADP(+) binding site. FMN-binding positions include 124–126, glycine 286, 301–305, and arginine 327; these read RSS and KPTAT.

Belongs to the chorismate synthase family. Homotetramer. FMNH2 is required as a cofactor.

The catalysed reaction is 5-O-(1-carboxyvinyl)-3-phosphoshikimate = chorismate + phosphate. The protein operates within metabolic intermediate biosynthesis; chorismate biosynthesis; chorismate from D-erythrose 4-phosphate and phosphoenolpyruvate: step 7/7. Its function is as follows. Catalyzes the anti-1,4-elimination of the C-3 phosphate and the C-6 proR hydrogen from 5-enolpyruvylshikimate-3-phosphate (EPSP) to yield chorismate, which is the branch point compound that serves as the starting substrate for the three terminal pathways of aromatic amino acid biosynthesis. This reaction introduces a second double bond into the aromatic ring system. This chain is Chorismate synthase, found in Gloeothece citriformis (strain PCC 7424) (Cyanothece sp. (strain PCC 7424)).